The following is a 210-amino-acid chain: MSKIVFCDFDGTITAVETFAGMLKEFAPDLSAQIMPQMYARTLTLRRGVRQLLESIPSQKYADILAYAESKPIRPGLAEFLAFLQEQSIPFIIISGGIQGMIETVLKREGLLDKVTAIYGVNLHTQGEYLQVHSDWENETELVAKALIMAKYSGVETIAIGDSVTDITMARRADLVFARDRLIDYLQAENQPYIPWDNFFEIREYLLLRD.

Belongs to the HAD-like hydrolase superfamily. MtnX family.

The enzyme catalyses 2-hydroxy-5-methylsulfanyl-3-oxopent-1-enyl phosphate + H2O = 1,2-dihydroxy-5-(methylsulfanyl)pent-1-en-3-one + phosphate. It participates in amino-acid biosynthesis; L-methionine biosynthesis via salvage pathway; L-methionine from S-methyl-5-thio-alpha-D-ribose 1-phosphate: step 4/6. Its function is as follows. Dephosphorylates 2-hydroxy-3-keto-5-methylthiopentenyl-1-phosphate (HK-MTPenyl-1-P) yielding 1,2-dihydroxy-3-keto-5-methylthiopentene (DHK-MTPene). This is 2-hydroxy-3-keto-5-methylthiopentenyl-1-phosphate phosphatase from Microcystis aeruginosa (strain NIES-843 / IAM M-2473).